Reading from the N-terminus, the 453-residue chain is Ribulose bisphosphate carboxylase large chain (453 aa).

The propeptide occupies 1–2 (MS). Pro-3 carries the post-translational modification N-acetylproline. Position 14 is an N6,N6,N6-trimethyllysine (Lys-14). Positions 123 and 173 each coordinate substrate. Catalysis depends on Lys-175, which acts as the Proton acceptor. Residue Lys-177 coordinates substrate. Mg(2+)-binding residues include Lys-201, Asp-203, and Glu-204. The residue at position 201 (Lys-201) is an N6-carboxylysine. His-294 serves as the catalytic Proton acceptor. The substrate site is built by Arg-295, His-327, and Ser-379.

The protein belongs to the RuBisCO large chain family. Type I subfamily. As to quaternary structure, heterohexadecamer of 8 large chains and 8 small chains; disulfide-linked. The disulfide link is formed within the large subunit homodimers. Requires Mg(2+) as cofactor. Post-translationally, the disulfide bond which can form in the large chain dimeric partners within the hexadecamer appears to be associated with oxidative stress and protein turnover.

It is found in the plastid. It localises to the chloroplast. The enzyme catalyses 2 (2R)-3-phosphoglycerate + 2 H(+) = D-ribulose 1,5-bisphosphate + CO2 + H2O. The catalysed reaction is D-ribulose 1,5-bisphosphate + O2 = 2-phosphoglycolate + (2R)-3-phosphoglycerate + 2 H(+). Functionally, ruBisCO catalyzes two reactions: the carboxylation of D-ribulose 1,5-bisphosphate, the primary event in carbon dioxide fixation, as well as the oxidative fragmentation of the pentose substrate in the photorespiration process. Both reactions occur simultaneously and in competition at the same active site. The polypeptide is Ribulose bisphosphate carboxylase large chain (Galium album (White bedstraw)).